Here is a 538-residue protein sequence, read N- to C-terminus: ESX-3 secretion system ATPase EccB3 (538 aa).

A compositionally biased stretch (basic and acidic residues) spans 1–16 (MTNQQHDHDFDHDRRS). The segment at 1 to 25 (MTNQQHDHDFDHDRRSFASRTPVNN) is disordered. Residues 75 to 95 (VLMGVLIVITGLIGSFVFSLI) traverse the membrane as a helical segment.

It belongs to the EccB family. In terms of assembly, part of the ESX-3 / type VII secretion system (T7SS), which is composed of cytosolic and membrane components. The ESX-3 membrane complex is composed of EccB3, EccC3, EccD3 and EccE3.

It localises to the cell inner membrane. An ATPase. Part of the ESX-3 specialized secretion system, which is important for iron and zinc uptake or homeostasis. This is ESX-3 secretion system ATPase EccB3 from Mycobacterium tuberculosis (strain CDC 1551 / Oshkosh).